Consider the following 262-residue polypeptide: MAWKSSVIMQMGRFLLLVILFLPREMTSSVLTVNGKTENYILDTTPGSQASLICAVQNHTREEELLWYREEGRVDLKSGNKINSSSVCVSSISENDNGISFTCRLGRDQSVSVSVVLNVTFPPLLSGNDFQTVEEGSNVKLVCNVKANPQAQMMWYKNSSLLDLEKSRHQIQQTSESFQLSITKVEKPDNGTYSCIAKSSLKTESLDFHLIVKDKTVGVPIEPIIAACVVIFLTLCFGLIARRKKIMKLCMKDKDPHSETAL.

The first 29 residues, 1 to 29 (MAWKSSVIMQMGRFLLLVILFLPREMTSS), serve as a signal peptide directing secretion. In terms of domain architecture, Ig-like C2-type 1 spans 30-114 (VLTVNGKTEN…LGRDQSVSVS (85 aa)). Residues 30-220 (VLTVNGKTEN…IVKDKTVGVP (191 aa)) lie on the Extracellular side of the membrane. A disulfide bridge connects residues C54 and C103. Residues N58, N83, N118, N158, and N190 are each glycosylated (N-linked (GlcNAc...) asparagine). Residues 122 to 207 (PPLLSGNDFQ…KSSLKTESLD (86 aa)) enclose the Ig-like C2-type 2 domain. A disulfide bridge connects residues C143 and C195. The chain crosses the membrane as a helical span at residues 221 to 241 (IEPIIAACVVIFLTLCFGLIA). Residues 242–262 (RRKKIMKLCMKDKDPHSETAL) are Cytoplasmic-facing.

In terms of assembly, homodimer. N-glycosylated.

The protein localises to the cell membrane. It localises to the cytoplasm. Functionally, may control cell-cell adhesion, cell migration and proliferation, cell morphology, and protects renal epithelial cells from oxidative cell injury to promote cell survival. The polypeptide is Transmembrane and immunoglobulin domain-containing protein 1 (Homo sapiens (Human)).